Consider the following 179-residue polypeptide: Vi polysaccharide biosynthesis protein TviA (179 aa).

It participates in glycan metabolism; Vi-antigen biosynthesis. It functions in the pathway capsule biogenesis; capsule polysaccharide biosynthesis. The sequence is that of Vi polysaccharide biosynthesis protein TviA (tviA) from Salmonella typhi.